A 128-amino-acid polypeptide reads, in one-letter code: Histone H2A type 1-J (128 aa).

The disordered stretch occupies residues 1–22 (MSGRGKQGGKARAKAKTRSSRA). Ser2 carries the N-acetylserine modification. Ser2 is subject to Phosphoserine; by RPS6KA5. The residue at position 4 (Arg4) is a Citrulline; alternate. Arg4 carries the post-translational modification Symmetric dimethylarginine; by PRMT5; alternate. An N6-(2-hydroxyisobutyryl)lysine modification is found at Lys6. A compositionally biased stretch (basic residues) spans 7-19 (QGGKARAKAKTRS). The residue at position 10 (Lys10) is an N6-(2-hydroxyisobutyryl)lysine; alternate. An N6-(beta-hydroxybutyryl)lysine; alternate mark is found at Lys10 and Lys14. Lys10 is modified (N6-lactoyllysine; alternate). Lys10 carries the post-translational modification N6-succinyllysine; alternate. Lys14 participates in a covalent cross-link: Glycyl lysine isopeptide (Lys-Gly) (interchain with G-Cter in ubiquitin); alternate. Residue Lys16 forms a Glycyl lysine isopeptide (Lys-Gly) (interchain with G-Cter in ubiquitin) linkage. Lys37 carries the post-translational modification N6-(2-hydroxyisobutyryl)lysine; alternate. Lys37 is modified (N6-(beta-hydroxybutyryl)lysine; alternate). Lys37 is modified (N6-crotonyllysine; alternate). N6-(2-hydroxyisobutyryl)lysine is present on residues Lys75 and Lys76. Lys96 carries the N6-(2-hydroxyisobutyryl)lysine; alternate modification. Lys96 carries the N6-(beta-hydroxybutyryl)lysine; alternate modification. Lys96 bears the N6-succinyllysine; alternate mark. Lys96 is modified (N6-glutaryllysine; alternate). Lys100 bears the N6-glutaryllysine mark. Gln105 carries the N5-methylglutamine modification. Lys119 carries the post-translational modification N6-(2-hydroxyisobutyryl)lysine; alternate. Lys119 is modified (N6-(beta-hydroxybutyryl)lysine; alternate). N6-crotonyllysine; alternate occurs at positions 119 and 120. An N6-glutaryllysine; alternate mark is found at Lys119 and Lys120. Lys120 participates in a covalent cross-link: Glycyl lysine isopeptide (Lys-Gly) (interchain with G-Cter in ubiquitin); alternate. Thr121 carries the phosphothreonine; by DCAF1 modification. Lys126 is modified (N6-crotonyllysine; alternate). Lys126 carries the post-translational modification N6-glutaryllysine; alternate.

The protein belongs to the histone H2A family. In terms of assembly, the nucleosome is a histone octamer containing two molecules each of H2A, H2B, H3 and H4 assembled in one H3-H4 heterotetramer and two H2A-H2B heterodimers. The octamer wraps approximately 147 bp of DNA. In terms of processing, deiminated on Arg-4 in granulocytes upon calcium entry. Post-translationally, monoubiquitination of Lys-120 (H2AK119Ub) by RING1, TRIM37 and RNF2/RING2 complex gives a specific tag for epigenetic transcriptional repression and participates in X chromosome inactivation of female mammals. It is involved in the initiation of both imprinted and random X inactivation. Ubiquitinated H2A is enriched in inactive X chromosome chromatin. Ubiquitination of H2A functions downstream of methylation of 'Lys-27' of histone H3 (H3K27me). H2AK119Ub by RNF2/RING2 can also be induced by ultraviolet and may be involved in DNA repair. Monoubiquitination of Lys-120 (H2AK119Ub) by TRIM37 may promote transformation of cells in a number of breast cancers. Following DNA double-strand breaks (DSBs), it is ubiquitinated through 'Lys-63' linkage of ubiquitin moieties by the E2 ligase UBE2N and the E3 ligases RNF8 and RNF168, leading to the recruitment of repair proteins to sites of DNA damage. Ubiquitination at Lys-14 and Lys-16 (H2AK13Ub and H2AK15Ub, respectively) in response to DNA damage is initiated by RNF168 that mediates monoubiquitination at these 2 sites, and 'Lys-63'-linked ubiquitin are then conjugated to monoubiquitin; RNF8 is able to extend 'Lys-63'-linked ubiquitin chains in vitro. Deubiquitinated by USP51 at Lys-14 and Lys-16 (H2AK13Ub and H2AK15Ub, respectively) after damaged DNA is repaired. H2AK119Ub and ionizing radiation-induced 'Lys-63'-linked ubiquitination (H2AK13Ub and H2AK15Ub) are distinct events. Phosphorylation on Ser-2 (H2AS1ph) is enhanced during mitosis. Phosphorylation on Ser-2 by RPS6KA5/MSK1 directly represses transcription. Acetylation of H3 inhibits Ser-2 phosphorylation by RPS6KA5/MSK1. Phosphorylation at Thr-121 (H2AT120ph) by DCAF1 is present in the regulatory region of many tumor suppresor genes and down-regulates their transcription. In terms of processing, glutamine methylation at Gln-105 (H2AQ104me) by FBL is specifically dedicated to polymerase I. It is present at 35S ribosomal DNA locus and impairs binding of the FACT complex. Post-translationally, symmetric dimethylation on Arg-4 by the PRDM1/PRMT5 complex may play a crucial role in the germ-cell lineage. Crotonylation (Kcr) is specifically present in male germ cells and marks testis-specific genes in post-meiotic cells, including X-linked genes that escape sex chromosome inactivation in haploid cells. Crotonylation marks active promoters and enhancers and confers resistance to transcriptional repressors. It is also associated with post-meiotically activated genes on autosomes. In terms of processing, lactylated in macrophages by EP300/P300 by using lactoyl-CoA directly derived from endogenous or exogenous lactate, leading to stimulates gene transcription.

Its subcellular location is the nucleus. It is found in the chromosome. In terms of biological role, core component of nucleosome. Nucleosomes wrap and compact DNA into chromatin, limiting DNA accessibility to the cellular machineries which require DNA as a template. Histones thereby play a central role in transcription regulation, DNA repair, DNA replication and chromosomal stability. DNA accessibility is regulated via a complex set of post-translational modifications of histones, also called histone code, and nucleosome remodeling. This chain is Histone H2A type 1-J, found in Homo sapiens (Human).